Reading from the N-terminus, the 400-residue chain is Cytoplasmic polyadenylated homeobox-like protein 2 (400 aa).

The tract at residues 1–29 (MSSQAFPAEEDHHNEERQTKKKRKTKHRH) is disordered. Residues 9–18 (EEDHHNEERQ) are compositionally biased toward basic and acidic residues. Basic residues predominate over residues 19–29 (TKKKRKTKHRH). Positions 24–83 (KTKHRHKFSEELLQELKEIFGENGYPDFTTRKTLANKFDCPVNVINNWFQNNRARLPPEE) form a DNA-binding region, homeobox.

The protein resides in the nucleus. The polypeptide is Cytoplasmic polyadenylated homeobox-like protein 2 (Homo sapiens (Human)).